The sequence spans 487 residues: Aspartyl/glutamyl-tRNA(Asn/Gln) amidotransferase subunit B (487 aa).

The protein belongs to the GatB/GatE family. GatB subfamily. As to quaternary structure, heterotrimer of A, B and C subunits.

The catalysed reaction is L-glutamyl-tRNA(Gln) + L-glutamine + ATP + H2O = L-glutaminyl-tRNA(Gln) + L-glutamate + ADP + phosphate + H(+). It carries out the reaction L-aspartyl-tRNA(Asn) + L-glutamine + ATP + H2O = L-asparaginyl-tRNA(Asn) + L-glutamate + ADP + phosphate + 2 H(+). In terms of biological role, allows the formation of correctly charged Asn-tRNA(Asn) or Gln-tRNA(Gln) through the transamidation of misacylated Asp-tRNA(Asn) or Glu-tRNA(Gln) in organisms which lack either or both of asparaginyl-tRNA or glutaminyl-tRNA synthetases. The reaction takes place in the presence of glutamine and ATP through an activated phospho-Asp-tRNA(Asn) or phospho-Glu-tRNA(Gln). The protein is Aspartyl/glutamyl-tRNA(Asn/Gln) amidotransferase subunit B of Leptospira biflexa serovar Patoc (strain Patoc 1 / Ames).